The chain runs to 95 residues: uncharacterized protein (95 aa).

Residues phenylalanine 3–leucine 23 traverse the membrane as a helical segment.

The protein localises to the membrane. This is an uncharacterized protein from Methanocaldococcus jannaschii (strain ATCC 43067 / DSM 2661 / JAL-1 / JCM 10045 / NBRC 100440) (Methanococcus jannaschii).